A 311-amino-acid chain; its full sequence is Peptide methionine sulfoxide reductase MsrA/MsrB 2 (311 aa).

The tract at residues 1–155 (MHEIYLAGGC…PNGYCHINVN (155 aa)) is peptide methionine sulfoxide reductase A. The active site involves Cys10. A MsrB domain is found at 172–295 (DEELKKTLSP…NSLSIRFIPK (124 aa)). Cys284 serves as the catalytic Nucleophile.

The protein in the N-terminal section; belongs to the MsrA Met sulfoxide reductase family. It in the C-terminal section; belongs to the MsrB Met sulfoxide reductase family.

It catalyses the reaction L-methionyl-[protein] + [thioredoxin]-disulfide + H2O = L-methionyl-(S)-S-oxide-[protein] + [thioredoxin]-dithiol. The enzyme catalyses [thioredoxin]-disulfide + L-methionine + H2O = L-methionine (S)-S-oxide + [thioredoxin]-dithiol. It carries out the reaction L-methionyl-[protein] + [thioredoxin]-disulfide + H2O = L-methionyl-(R)-S-oxide-[protein] + [thioredoxin]-dithiol. Functionally, has an important function as a repair enzyme for proteins that have been inactivated by oxidation. Catalyzes the reversible oxidation-reduction of methionine sulfoxide in proteins to methionine. The protein is Peptide methionine sulfoxide reductase MsrA/MsrB 2 (msrAB2) of Streptococcus pneumoniae serotype 4 (strain ATCC BAA-334 / TIGR4).